The chain runs to 169 residues: uncharacterized protein (169 aa).

It is found in the mitochondrion. This is an uncharacterized protein from Marchantia polymorpha (Common liverwort).